The sequence spans 270 residues: NADPH-dependent 7-cyano-7-deazaguanine reductase (270 aa).

79–81 is a substrate binding site; sequence IES. 81–82 is a binding site for NADPH; the sequence is SK. Cys-177 serves as the catalytic Thioimide intermediate. Asp-184 serves as the catalytic Proton donor. 216–217 lines the substrate pocket; that stretch reads HE. 245-246 lines the NADPH pocket; sequence RG.

Belongs to the GTP cyclohydrolase I family. QueF type 2 subfamily. As to quaternary structure, homodimer.

Its subcellular location is the cytoplasm. It carries out the reaction 7-aminomethyl-7-carbaguanine + 2 NADP(+) = 7-cyano-7-deazaguanine + 2 NADPH + 3 H(+). It participates in tRNA modification; tRNA-queuosine biosynthesis. In terms of biological role, catalyzes the NADPH-dependent reduction of 7-cyano-7-deazaguanine (preQ0) to 7-aminomethyl-7-deazaguanine (preQ1). In Acinetobacter baumannii (strain AB307-0294), this protein is NADPH-dependent 7-cyano-7-deazaguanine reductase.